Consider the following 89-residue polypeptide: Large ribosomal subunit protein uL30 (89 aa).

It belongs to the universal ribosomal protein uL30 family. Part of the 50S ribosomal subunit.

This chain is Large ribosomal subunit protein uL30, found in Myxococcus xanthus (strain DK1622).